Consider the following 807-residue polypeptide: Glycerol-3-phosphate acyltransferase (807 aa).

Positions 308–313 (CHRSHM) match the HXXXXD motif motif.

The protein belongs to the GPAT/DAPAT family.

The protein resides in the cell inner membrane. The catalysed reaction is sn-glycerol 3-phosphate + an acyl-CoA = a 1-acyl-sn-glycero-3-phosphate + CoA. Its pathway is phospholipid metabolism; CDP-diacylglycerol biosynthesis; CDP-diacylglycerol from sn-glycerol 3-phosphate: step 1/3. In Shewanella baltica (strain OS155 / ATCC BAA-1091), this protein is Glycerol-3-phosphate acyltransferase.